Here is a 429-residue protein sequence, read N- to C-terminus: Probable electron transfer flavoprotein-quinone oxidoreductase YdiS (429 aa).

Alanine 8 to leucine 22 provides a ligand contact to FAD.

Belongs to the ETF-QO/FixC family. FAD serves as cofactor.

In terms of biological role, probably accepts electrons from YdiQ/YdiR and reduces a quinone. In Escherichia coli (strain K12), this protein is Probable electron transfer flavoprotein-quinone oxidoreductase YdiS (ydiS).